We begin with the raw amino-acid sequence, 205 residues long: Thiamine-phosphate synthase (205 aa).

Residues Q34–K38 and N66 contribute to the 4-amino-2-methyl-5-(diphosphooxymethyl)pyrimidine site. The Mg(2+) site is built by D67 and D86. Residue S105 participates in 4-amino-2-methyl-5-(diphosphooxymethyl)pyrimidine binding. T131–T133 serves as a coordination point for 2-[(2R,5Z)-2-carboxy-4-methylthiazol-5(2H)-ylidene]ethyl phosphate. 4-amino-2-methyl-5-(diphosphooxymethyl)pyrimidine is bound at residue K134. G163 lines the 2-[(2R,5Z)-2-carboxy-4-methylthiazol-5(2H)-ylidene]ethyl phosphate pocket.

It belongs to the thiamine-phosphate synthase family. Mg(2+) is required as a cofactor.

It catalyses the reaction 2-[(2R,5Z)-2-carboxy-4-methylthiazol-5(2H)-ylidene]ethyl phosphate + 4-amino-2-methyl-5-(diphosphooxymethyl)pyrimidine + 2 H(+) = thiamine phosphate + CO2 + diphosphate. The enzyme catalyses 2-(2-carboxy-4-methylthiazol-5-yl)ethyl phosphate + 4-amino-2-methyl-5-(diphosphooxymethyl)pyrimidine + 2 H(+) = thiamine phosphate + CO2 + diphosphate. It carries out the reaction 4-methyl-5-(2-phosphooxyethyl)-thiazole + 4-amino-2-methyl-5-(diphosphooxymethyl)pyrimidine + H(+) = thiamine phosphate + diphosphate. It participates in cofactor biosynthesis; thiamine diphosphate biosynthesis; thiamine phosphate from 4-amino-2-methyl-5-diphosphomethylpyrimidine and 4-methyl-5-(2-phosphoethyl)-thiazole: step 1/1. Functionally, condenses 4-methyl-5-(beta-hydroxyethyl)thiazole monophosphate (THZ-P) and 2-methyl-4-amino-5-hydroxymethyl pyrimidine pyrophosphate (HMP-PP) to form thiamine monophosphate (TMP). This is Thiamine-phosphate synthase from Neisseria meningitidis serogroup B (strain ATCC BAA-335 / MC58).